A 372-amino-acid polypeptide reads, in one-letter code: MSSGLDLELSFSQSLQGLGLSPQVAHLIWLPLPMLLVLTAAMVGVLVTVWLERKISAAVQQRIGPEYAGALGVLQPMADGLKLLVKEDVIPVRADGLLFTLGPVLVLVPVILSWLIVPFGQNLLISNVGIGIFLWISLSSIQPIGLLMSGYASNNKYSLLGGLRAAAQSISYEIPLALAVLAVVMMSNSLSTVDIVAQQNGAGLLSWNVWRQPVGFLIFWICALAECERLPFDLPEAEEELVAGYQTEYAGMKFALFYLGSYINLVLSSLLVAVLYLGGWGFPIPVEWLAGWLGQSVDAPLVQVITGSVGIVMTVLKAYLLVFLAILLRWTTPRVRIDQLLDLGWKFLLPIALGNLLITAALKLAFPVAFGG.

Helical transmembrane passes span 27 to 47 (LIWL…GVLV), 97 to 117 (LLFT…WLIV), 128 to 148 (VGIG…GLLM), 166 to 186 (AAQS…VVMM), 204 to 224 (LLSW…ICAL), 266 to 286 (VLSS…PIPV), 308 to 328 (SVGI…AILL), and 347 to 367 (FLLP…LAFP).

The protein belongs to the complex I subunit 1 family. As to quaternary structure, NDH-1 is composed of at least 11 different subunits.

It is found in the cellular thylakoid membrane. The catalysed reaction is a plastoquinone + NADH + (n+1) H(+)(in) = a plastoquinol + NAD(+) + n H(+)(out). The enzyme catalyses a plastoquinone + NADPH + (n+1) H(+)(in) = a plastoquinol + NADP(+) + n H(+)(out). Functionally, NDH-1 shuttles electrons from an unknown electron donor, via FMN and iron-sulfur (Fe-S) centers, to quinones in the respiratory and/or the photosynthetic chain. The immediate electron acceptor for the enzyme in this species is believed to be plastoquinone. Couples the redox reaction to proton translocation, and thus conserves the redox energy in a proton gradient. The chain is NAD(P)H-quinone oxidoreductase subunit 1 from Prochlorococcus marinus (strain MIT 9313).